A 210-amino-acid chain; its full sequence is Na(+)-translocating NADH-quinone reductase subunit D (210 aa).

5 helical membrane passes run 42-62 (FVMT…VSLI), 72-92 (IIVQ…VLKA), 103-123 (VFVG…AFAM), 131-151 (LIDG…VGFF), and 178-198 (NGLM…IWVI).

Belongs to the NqrDE/RnfAE family. Composed of six subunits; NqrA, NqrB, NqrC, NqrD, NqrE and NqrF.

The protein resides in the cell inner membrane. The enzyme catalyses a ubiquinone + n Na(+)(in) + NADH + H(+) = a ubiquinol + n Na(+)(out) + NAD(+). This reaction is tightly coupled to the Na(+) pumping activity and specifically requires Na(+) for activity. Inhibited by korormicin and 2-N-heptyl-4-hydroxyquinoline N-oxide (HQNO). In terms of biological role, NQR complex catalyzes the reduction of ubiquinone-1 to ubiquinol by two successive reactions, coupled with the transport of Na(+) ions from the cytoplasm to the periplasm. NqrA to NqrE are probably involved in the second step, the conversion of ubisemiquinone to ubiquinol. The sequence is that of Na(+)-translocating NADH-quinone reductase subunit D from Vibrio alginolyticus.